The chain runs to 243 residues: Geranylgeranylglyceryl phosphate synthase (243 aa).

Mg(2+) is bound by residues Asp-29 and Ser-58. Sn-glycerol 1-phosphate is bound by residues 178 to 184 (YLEAGSG), 209 to 210 (GG), and 231 to 232 (GT).

It belongs to the GGGP/HepGP synthase family. Group II subfamily. As to quaternary structure, homodimer. Mg(2+) serves as cofactor.

The catalysed reaction is sn-glycerol 1-phosphate + (2E,6E,10E)-geranylgeranyl diphosphate = sn-3-O-(geranylgeranyl)glycerol 1-phosphate + diphosphate. In terms of biological role, prenyltransferase that catalyzes the transfer of the geranylgeranyl moiety of geranylgeranyl diphosphate (GGPP) to the C3 hydroxyl of sn-glycerol-1-phosphate (G1P). This Flavobacterium johnsoniae (strain ATCC 17061 / DSM 2064 / JCM 8514 / BCRC 14874 / CCUG 350202 / NBRC 14942 / NCIMB 11054 / UW101) (Cytophaga johnsonae) protein is Geranylgeranylglyceryl phosphate synthase.